We begin with the raw amino-acid sequence, 315 residues long: Cross-pathway control WD-repeat protein 2 (315 aa).

7 WD repeats span residues 14 to 54 (GHKG…DSYG), 62 to 101 (GHNH…TTRR), 104 to 144 (GHTS…YDIK), 147 to 188 (CHTE…LKTN), 191 to 230 (GHTG…HLYS), 232 to 270 (EAGD…IVDE), and 282 to 315 (GRQP…TVTS).

Belongs to the WD repeat G protein beta family. Ribosomal protein RACK1 subfamily.

Component of the ribosome, a large ribonucleoprotein complex responsible for the synthesis of proteins in the cell. The small ribosomal subunit (SSU) binds messenger RNAs (mRNAs) and translates the encoded message by selecting cognate aminoacyl-transfer RNA (tRNA) molecules. The large subunit (LSU) contains the ribosomal catalytic site termed the peptidyl transferase center (PTC), which catalyzes the formation of peptide bonds, thereby polymerizing the amino acids delivered by tRNAs into a polypeptide chain. The nascent polypeptides leave the ribosome through a tunnel in the LSU and interact with protein factors that function in enzymatic processing, targeting, and the membrane insertion of nascent chains at the exit of the ribosomal tunnel. Plays in important role in the regulation of vegetative growth and fruiting body development. Especially, positively regulates the expression of genes involved in fruiting body development such as FVFD30 and FVFD16, as well as genes encoding for lectins and hydrophobins. Also regulates the expression of genes involved in cAMP signaling pathway. In Flammulina velutipes (Agaricus velutipes), this protein is Cross-pathway control WD-repeat protein 2.